Consider the following 290-residue polypeptide: Nucleotide-binding protein Xfasm12_0753 (290 aa).

Glycine 13 to serine 20 contacts ATP. Residue aspartate 65–serine 68 participates in GTP binding.

The protein belongs to the RapZ-like family.

Displays ATPase and GTPase activities. This chain is Nucleotide-binding protein Xfasm12_0753, found in Xylella fastidiosa (strain M12).